A 479-amino-acid chain; its full sequence is MSIVVKNNIHWVGQRDWEVRDFHGTEYKTLRGSSYNSYLIREEKNVLIDTVDHKFSREFVQNLRNEIDLADIDYIVINHAEEDHAGALTELMAQIPDTPIYCTANAIDSINGHHHHPEWNFNVVKTGDTLDIGNGKQLIFVETPMLHWPDSMMTYLTGDAVLFSNDAFGQHYCDEHLFNDEVDQTELFEQCQRYYSNILTPFSRLVTPKITEILGFNLPVDMIATSHGVVWRDNPTQIVELYLKWAADYQEDRITIFYDTMSNNTRMMADAIAQGIAETDPRVAVKIFNIARSDKNEILTNVFRSKGVLVGTSTMNNVMMPKIAGLVEEMTGLRFRNKRASAFGSHGWSGGAVDRLSTRLQDAGFEMSLSLKAKWRPDQDALELCREHGREIARQWALAPLPQSTVNTVVKEETSATTTADLGPRMQCSVCQWIYDPAKGEPMQDVAPGTPWSEVPDNFLCPECSLGKDVFEELASEAK.

The interval 30–210 (LRGSSYNSYL…PFSRLVTPKI (181 aa)) is zinc metallo-hydrolase. Histidine 79, glutamate 81, aspartate 83, histidine 147, aspartate 166, and histidine 227 together coordinate Fe cation. In terms of domain architecture, Flavodoxin-like spans 254 to 393 (ITIFYDTMSN…LCREHGREIA (140 aa)). Residues 260–264 (TMSNN) and 342–369 (AFGS…EMSL) each bind FMN. The Rubredoxin-like domain occupies 423–474 (GPRMQCSVCQWIYDPAKGEPMQDVAPGTPWSEVPDNFLCPECSLGKDVFEEL). Positions 428, 431, 461, and 464 each coordinate Fe cation.

The protein in the N-terminal section; belongs to the zinc metallo-hydrolase group 3 family. As to quaternary structure, homotetramer. The cofactor is Fe cation. FMN is required as a cofactor.

Its subcellular location is the cytoplasm. The protein operates within nitrogen metabolism; nitric oxide reduction. Its function is as follows. Anaerobic nitric oxide reductase; uses NADH to detoxify nitric oxide (NO), protecting several 4Fe-4S NO-sensitive enzymes. Has at least 2 reductase partners, only one of which (NorW, flavorubredoxin reductase) has been identified. NO probably binds to the di-iron center; electrons enter from the NorW at rubredoxin and are transferred sequentially to the FMN center and the di-iron center. Also able to function as an aerobic oxygen reductase. The sequence is that of Anaerobic nitric oxide reductase flavorubredoxin from Shigella dysenteriae serotype 1 (strain Sd197).